The chain runs to 76 residues: uncharacterized protein (76 aa).

Residues 27–76 form a disordered region; that stretch reads SINNGEGSSVVHRDATAPPTPPVVPTSTLQVPGLQRARTPEPNDPRVANL.

This is an uncharacterized protein from Caenorhabditis elegans.